Reading from the N-terminus, the 460-residue chain is Bifunctional protein GlmU (460 aa).

A pyrophosphorylase region spans residues 1-232 (MALNVVILAA…AIEVEGANNR (232 aa)). Residues 8–11 (LAAG), lysine 22, glutamine 73, 78–79 (GT), 100–102 (YGD), glycine 137, glutamate 157, asparagine 172, and asparagine 230 contribute to the UDP-N-acetyl-alpha-D-glucosamine site. Aspartate 102 serves as a coordination point for Mg(2+). Residue asparagine 230 participates in Mg(2+) binding. The linker stretch occupies residues 233–253 (VQLAQLERAYQAREAEKLMLA). Residues 254–460 (GANLRDPSRI…GWQRPVKIKK (207 aa)) form an N-acetyltransferase region. The UDP-N-acetyl-alpha-D-glucosamine site is built by arginine 336 and lysine 354. Histidine 366 acts as the Proton acceptor in catalysis. UDP-N-acetyl-alpha-D-glucosamine-binding residues include tyrosine 369 and asparagine 380. Acetyl-CoA is bound by residues alanine 383, 389 to 390 (NY), serine 408, alanine 426, and arginine 443.

This sequence in the N-terminal section; belongs to the N-acetylglucosamine-1-phosphate uridyltransferase family. In the C-terminal section; belongs to the transferase hexapeptide repeat family. Homotrimer. Mg(2+) serves as cofactor.

Its subcellular location is the cytoplasm. The catalysed reaction is alpha-D-glucosamine 1-phosphate + acetyl-CoA = N-acetyl-alpha-D-glucosamine 1-phosphate + CoA + H(+). It catalyses the reaction N-acetyl-alpha-D-glucosamine 1-phosphate + UTP + H(+) = UDP-N-acetyl-alpha-D-glucosamine + diphosphate. It functions in the pathway nucleotide-sugar biosynthesis; UDP-N-acetyl-alpha-D-glucosamine biosynthesis; N-acetyl-alpha-D-glucosamine 1-phosphate from alpha-D-glucosamine 6-phosphate (route II): step 2/2. Its pathway is nucleotide-sugar biosynthesis; UDP-N-acetyl-alpha-D-glucosamine biosynthesis; UDP-N-acetyl-alpha-D-glucosamine from N-acetyl-alpha-D-glucosamine 1-phosphate: step 1/1. The protein operates within bacterial outer membrane biogenesis; LPS lipid A biosynthesis. Its function is as follows. Catalyzes the last two sequential reactions in the de novo biosynthetic pathway for UDP-N-acetylglucosamine (UDP-GlcNAc). The C-terminal domain catalyzes the transfer of acetyl group from acetyl coenzyme A to glucosamine-1-phosphate (GlcN-1-P) to produce N-acetylglucosamine-1-phosphate (GlcNAc-1-P), which is converted into UDP-GlcNAc by the transfer of uridine 5-monophosphate (from uridine 5-triphosphate), a reaction catalyzed by the N-terminal domain. This chain is Bifunctional protein GlmU, found in Shewanella baltica (strain OS195).